We begin with the raw amino-acid sequence, 179 residues long: Adenine phosphoribosyltransferase (179 aa).

The protein belongs to the purine/pyrimidine phosphoribosyltransferase family. Homodimer.

It is found in the cytoplasm. It carries out the reaction AMP + diphosphate = 5-phospho-alpha-D-ribose 1-diphosphate + adenine. It functions in the pathway purine metabolism; AMP biosynthesis via salvage pathway; AMP from adenine: step 1/1. In terms of biological role, catalyzes a salvage reaction resulting in the formation of AMP, that is energically less costly than de novo synthesis. The protein is Adenine phosphoribosyltransferase of Helicobacter pylori (strain HPAG1).